The chain runs to 296 residues: Light-independent protochlorophyllide reductase iron-sulfur ATP-binding protein (296 aa).

Residues 1 to 20 are disordered; the sequence is MTTTLSRPTDGEGSVQVQQD. Residues 39–44 and lysine 68 each bind ATP; that span reads GIGKST. Serine 43 serves as a coordination point for Mg(2+). 2 residues coordinate [4Fe-4S] cluster: cysteine 124 and cysteine 158. 209–210 contacts ATP; that stretch reads NR.

It belongs to the NifH/BchL/ChlL family. In terms of assembly, homodimer. Protochlorophyllide reductase is composed of three subunits; ChlL, ChlN and ChlB. Requires [4Fe-4S] cluster as cofactor.

It catalyses the reaction chlorophyllide a + oxidized 2[4Fe-4S]-[ferredoxin] + 2 ADP + 2 phosphate = protochlorophyllide a + reduced 2[4Fe-4S]-[ferredoxin] + 2 ATP + 2 H2O. It participates in porphyrin-containing compound metabolism; chlorophyll biosynthesis (light-independent). Functionally, component of the dark-operative protochlorophyllide reductase (DPOR) that uses Mg-ATP and reduced ferredoxin to reduce ring D of protochlorophyllide (Pchlide) to form chlorophyllide a (Chlide). This reaction is light-independent. The L component serves as a unique electron donor to the NB-component of the complex, and binds Mg-ATP. In Synechococcus sp. (strain CC9902), this protein is Light-independent protochlorophyllide reductase iron-sulfur ATP-binding protein.